The sequence spans 237 residues: Ribosomal RNA small subunit methyltransferase G (237 aa).

Residues Gly-78, Phe-83, 129 to 130 (AE), and Arg-148 contribute to the S-adenosyl-L-methionine site. The tract at residues 218-237 (KKETPNKFPRKAGMPNKRPL) is disordered.

It belongs to the methyltransferase superfamily. RNA methyltransferase RsmG family.

The protein localises to the cytoplasm. In terms of biological role, specifically methylates the N7 position of a guanine in 16S rRNA. This Streptococcus suis (strain 98HAH33) protein is Ribosomal RNA small subunit methyltransferase G.